The following is a 363-amino-acid chain: Regulator of G-protein signaling rgs-3 (363 aa).

Residues 1-70 (MWRSYKAETP…NSSATSPTPS (70 aa)) form a disordered region. The segment covering 21 to 35 (LNLHDSSESDHEGRQ) has biased composition (basic and acidic residues). Low complexity-rich tracts occupy residues 36–50 (SRSA…APAS) and 58–70 (PITN…PTPS). RGS domains follow at residues 112 to 225 (NCAN…LEYL) and 240 to 359 (SFEG…IDLL).

In terms of processing, may be phosphorylated and activated by egl-4.

Its function is as follows. Modulates chemotaxis responses by regulating positively the sensitivity to CO2 levels in BAG neurons and by regulating negatively the sensitivity to quinine in ASH sensory neurons. The polypeptide is Regulator of G-protein signaling rgs-3 (rgs-3) (Caenorhabditis elegans).